Reading from the N-terminus, the 466-residue chain is Ribulose bisphosphate carboxylase large chain (466 aa).

Lys5 is modified (N6,N6,N6-trimethyllysine). Residues Asn114 and Thr164 each contribute to the substrate site. Residue Lys166 is the Proton acceptor of the active site. Lys168 is a substrate binding site. 3 residues coordinate Mg(2+): Lys192, Asp194, and Glu195. Lys192 carries the post-translational modification N6-carboxylysine. Catalysis depends on His285, which acts as the Proton acceptor. 3 residues coordinate substrate: Arg286, His318, and Ser370.

The protein belongs to the RuBisCO large chain family. Type I subfamily. In terms of assembly, heterohexadecamer of 8 large chains and 8 small chains; disulfide-linked. The disulfide link is formed within the large subunit homodimers. It depends on Mg(2+) as a cofactor. The disulfide bond which can form in the large chain dimeric partners within the hexadecamer appears to be associated with oxidative stress and protein turnover.

It is found in the plastid. The protein localises to the chloroplast. The catalysed reaction is 2 (2R)-3-phosphoglycerate + 2 H(+) = D-ribulose 1,5-bisphosphate + CO2 + H2O. It catalyses the reaction D-ribulose 1,5-bisphosphate + O2 = 2-phosphoglycolate + (2R)-3-phosphoglycerate + 2 H(+). Its function is as follows. RuBisCO catalyzes two reactions: the carboxylation of D-ribulose 1,5-bisphosphate, the primary event in carbon dioxide fixation, as well as the oxidative fragmentation of the pentose substrate in the photorespiration process. Both reactions occur simultaneously and in competition at the same active site. The polypeptide is Ribulose bisphosphate carboxylase large chain (Drosophyllum lusitanicum (Portuguese sundew)).